The sequence spans 255 residues: Imidazole glycerol phosphate synthase subunit HisF (255 aa).

Residues aspartate 12 and aspartate 131 contribute to the active site.

Belongs to the HisA/HisF family. Heterodimer of HisH and HisF.

It is found in the cytoplasm. It catalyses the reaction 5-[(5-phospho-1-deoxy-D-ribulos-1-ylimino)methylamino]-1-(5-phospho-beta-D-ribosyl)imidazole-4-carboxamide + L-glutamine = D-erythro-1-(imidazol-4-yl)glycerol 3-phosphate + 5-amino-1-(5-phospho-beta-D-ribosyl)imidazole-4-carboxamide + L-glutamate + H(+). It functions in the pathway amino-acid biosynthesis; L-histidine biosynthesis; L-histidine from 5-phospho-alpha-D-ribose 1-diphosphate: step 5/9. IGPS catalyzes the conversion of PRFAR and glutamine to IGP, AICAR and glutamate. The HisF subunit catalyzes the cyclization activity that produces IGP and AICAR from PRFAR using the ammonia provided by the HisH subunit. The chain is Imidazole glycerol phosphate synthase subunit HisF from Neisseria gonorrhoeae (strain ATCC 700825 / FA 1090).